We begin with the raw amino-acid sequence, 193 residues long: uncharacterized protein (193 aa).

The stretch at 86 to 181 (TKQRELLEIL…QVEEVQAEVG (96 aa)) forms a coiled coil.

This is an uncharacterized protein from Streptococcus pyogenes serotype M6 (strain ATCC BAA-946 / MGAS10394).